Reading from the N-terminus, the 442-residue chain is Transcription factor MYCFIDRAFT_198930 (442 aa).

Residues 1–34 (MSTTPMAAPPGADLKPVTSSRGRSSTSDEQKLRS) are disordered. The segment at residues 36 to 63 (CESCAQSKLKCSGDKPACARCAKRGLAC) is a DNA-binding region (zn(2)-C6 fungal-type). The interval 74 to 107 (KPKGYTSTNDNNPSKRREDSHSPAASQWSSTGHL) is disordered. The span at 96-107 (PAASQWSSTGHL) shows a compositional bias: polar residues.

The protein resides in the nucleus. Transcription factor that positively regulates the expression of the gene cluster that mediates the biosynthesis of an emodin derivative that may be involved in black Sigatoka disease of banana. This chain is Transcription factor MYCFIDRAFT_198930, found in Pseudocercospora fijiensis (strain CIRAD86) (Black leaf streak disease fungus).